The sequence spans 201 residues: Recombination protein RecR (201 aa).

The C4-type zinc finger occupies 57 to 72 (CTHCRTFTEEESCAIC). The Toprim domain occupies 81 to 176 (GFLCVVEQPS…KVSRIAHGIP (96 aa)).

It belongs to the RecR family.

In terms of biological role, may play a role in DNA repair. It seems to be involved in an RecBC-independent recombinational process of DNA repair. It may act with RecF and RecO. This chain is Recombination protein RecR, found in Histophilus somni (strain 2336) (Haemophilus somnus).